Reading from the N-terminus, the 403-residue chain is Serine/threonine transporter SstT (403 aa).

9 helical membrane passes run 14-34, 44-64, 79-99, 138-158, 175-195, 214-234, 295-315, 327-347, and 353-373; these read VTQIVIGLLAGIALALLAPAI, VFVSALKAVAPVLVFILVMAS, ILWLYLLGTFAAAVVAVFASM, ALLNANFIGVLTWAIGLGVAL, GVTLIVRVVIRFAPLGIFGLV, LAVLIGCMLFVALVMNPLIVF, MAGAAITITVLTLAAVHTLGI, VVAAVCACGASGVAGGSLLLI, and LFGIPSEIAMQVVAVGFIIGV.

This sequence belongs to the dicarboxylate/amino acid:cation symporter (DAACS) (TC 2.A.23) family.

The protein localises to the cell inner membrane. The catalysed reaction is L-serine(in) + Na(+)(in) = L-serine(out) + Na(+)(out). It carries out the reaction L-threonine(in) + Na(+)(in) = L-threonine(out) + Na(+)(out). Functionally, involved in the import of serine and threonine into the cell, with the concomitant import of sodium (symport system). This Pseudomonas putida (strain ATCC 47054 / DSM 6125 / CFBP 8728 / NCIMB 11950 / KT2440) protein is Serine/threonine transporter SstT.